The chain runs to 209 residues: Guanylate kinase (209 aa).

In terms of domain architecture, Guanylate kinase-like spans G10 to V189. An ATP-binding site is contributed by A17–T24.

It belongs to the guanylate kinase family.

Its subcellular location is the cytoplasm. It catalyses the reaction GMP + ATP = GDP + ADP. Functionally, essential for recycling GMP and indirectly, cGMP. The chain is Guanylate kinase from Myxococcus xanthus (strain DK1622).